Consider the following 391-residue polypeptide: Zinc finger protein ubi-d4 (391 aa).

Ala2 is subject to N-acetylalanine. Residues Lys10, Lys99, Lys107, and Lys108 each participate in a glycyl lysine isopeptide (Lys-Gly) (interchain with G-Cter in SUMO2) cross-link. Disordered regions lie at residues Trp79–Pro147 and Asp165–Ala199. Basic and acidic residues-rich tracts occupy residues Pro100–Gly110 and Asp126–Asp140. Residue Ser142 is modified to Phosphoserine. Acidic residues predominate over residues Asp165–Glu174. Phosphotyrosine is present on Tyr172. Thr176 bears the Phosphothreonine mark. Residues Lys178 and Lys196 each participate in a glycyl lysine isopeptide (Lys-Gly) (interchain with G-Cter in SUMO2) cross-link. A Phosphoserine modification is found at Ser200. The segment at Tyr209–His232 adopts a C2H2-type zinc-finger fold. Residues Leu233–Leu266 are disordered. Position 244 is a phosphoserine (Ser244). The span at Arg253 to Pro263 shows a compositional bias: basic and acidic residues. 2 consecutive PHD-type zinc fingers follow at residues Asn270–Cys330 and Cys327–Leu377. Ser280 is subject to Phosphoserine. Residue Lys281 forms a Glycyl lysine isopeptide (Lys-Gly) (interchain with G-Cter in SUMO2) linkage.

Belongs to the requiem/DPF family. As to quaternary structure, interacts with the nucleosomes, in particular nucleosomes bearing histone H3 crotonylated at 'Lys-14' (H3K14cr) for which DPF2 has high affinity. Also interacts (via PHD-type zinc finger domains) with histone H3 butyrylated at 'Lys-14' (H3K14bu), histone H3 propionylated at 'Lys-14' (H3K14pr), and histone H3 acetylated at 'Lys-14' (H3K14ac). Interacts with histone H3 acetylated at 'Lys-9' (H3K9ac), histone H3 di-methylated at 'Lys-9' (H3K9me2), and histone H3 tri-methylated at 'Lys-9' (H3K9me3). Interacts with histone H4 acetylated at 'Lys-12' (H4K12ac). Interacts with histone H4 acetylated at 'Lys-16' (H4K16ac). Interacts with SWI/SNF complex components. Interacts with SMARCA2, SMARCA4, SMARCB1 and SMARCD1. Interacts with SMARCC1, SMARCC2 and ACTL6A. Interacts with RUNX1. In embryo, highest levels are seen in brain, eyes, thymus and olfactory epithelium in nose, whereas several other tissues, including the musculoskeletal system, show moderate expression. In adult, higher expression in testis, medium in thymus and spleen, lower in certain parts of the brain as the hippocampus. No expression in adult heart, lung, liver, duodenum and kidney.

The protein localises to the nucleus. It localises to the cytoplasm. Its function is as follows. Plays an active role in transcriptional regulation by binding modified histones H3 and H4. Is a negative regulator of myeloid differentiation of hematopoietic progenitor cells. Might also have a role in the development and maturation of lymphoid cells. Involved in the regulation of non-canonical NF-kappa-B pathway. This chain is Zinc finger protein ubi-d4 (Dpf2), found in Mus musculus (Mouse).